The sequence spans 244 residues: Small ribosomal subunit protein eS4 (244 aa).

An S4 RNA-binding domain is found at 37-123 (VPLAILLKYY…AKYKFVRIMN (87 aa)).

The protein belongs to the eukaryotic ribosomal protein eS4 family.

In Sulfolobus acidocaldarius (strain ATCC 33909 / DSM 639 / JCM 8929 / NBRC 15157 / NCIMB 11770), this protein is Small ribosomal subunit protein eS4 (rps4e).